A 341-amino-acid chain; its full sequence is KRR1 small subunit processome component homolog (341 aa).

In terms of domain architecture, KH spans 126 to 194; that stretch reads DIIKIGNLVH…VRDIVLETMN (69 aa). Over residues 230–244 the composition is skewed to basic residues; sequence KNKNISKRKQPKSRK. Positions 230 to 327 are disordered; the sequence is KNKNISKRKQ…RPSEASKVDV (98 aa). The stretch at 271–341 forms a coiled coil; it reads FLNKEQKQAK…AKLLKANKQK (71 aa). 2 stretches are compositionally biased toward basic and acidic residues: residues 272–303 and 313–327; these read LNKEQKQAKRQQERVAKQAEAAKKQDERRNKD and EQNRKRPSEASKVDV.

The protein belongs to the KRR1 family. As to quaternary structure, monomer. Component of the ribosomal small subunit (SSU) processome.

The protein localises to the nucleus. It localises to the nucleolus. Functionally, required for 40S ribosome biogenesis. Involved in nucleolar processing of pre-18S ribosomal RNA and ribosome assembly. Binds to RNA. Required for female germline development, cell viability during eye development and for survival of dividing cells and epithelial cells during early wing disk development. In Drosophila grimshawi (Hawaiian fruit fly), this protein is KRR1 small subunit processome component homolog.